A 118-amino-acid polypeptide reads, in one-letter code: DNA-binding protein inhibitor ID-3-B (118 aa).

One can recognise a bHLH domain in the interval 32 to 84; it reads SLKGAGIDETMGLLYDMNGCYSKLKELVPGIPQGSKLSQVEILQHVIDYIFDL.

In terms of assembly, homodimer. Heterodimer with other HLH proteins. Interacts (via HLH domain) with the bHLH protein hes4/hairy2 (via Orange domain). Interacts with stat3.

The protein resides in the nucleus. Functionally, transcriptional regulator (lacking a basic DNA binding domain) which negatively regulates the basic helix-loop-helix (bHLH) transcription factors by forming heterodimers and inhibiting their DNA binding and transcriptional activity. Influences cell fate decisions in the embryo by sequestering and blocking the activity of the bHLH transcription factors that control these decisions. Inhibits the binding of myogenic bHLH-containing complexes to E-box DNA, thereby preventing activation of muscle-specific target genes. Also inhibits the activity of neurogenic factor neurod1/neuroD. Plays a role in cell cycle progression and survival of neural crest progenitors; binding to either hes4-B/hairy2b or stat3 blocks the formation of transcription factor complexes and the repressor function of hes4-B/hairy2B, to allow neural crest progenitors to differentiate. May play a role in the regulation of the circadian rhythm. The polypeptide is DNA-binding protein inhibitor ID-3-B (id3-b) (Xenopus laevis (African clawed frog)).